The sequence spans 242 residues: MMVNDDFQEYVKQLVTKHRDERIYPFQYEGKKYWLKQPEKLKGIWLLLKPHPKKSFKNELYTLLKLAEQNAPVPKVSYYSDHFFVLENVGLTVSQWLCNKNIDEQQKFLIIYDACLALIDLHAKNLVHGRPAIRDITWDKGKVTFLDFESRSNSRNQNWVVIRDMLFFFDSLCREEDISDTFIQKVALYYQTHCEAKNWQNMIVFLQRFSWVYYLLLPFKPIAKTDLISIYRLFEIFLIKKK.

This is an uncharacterized protein from Haemophilus influenzae (strain ATCC 51907 / DSM 11121 / KW20 / Rd).